Here is a 159-residue protein sequence, read N- to C-terminus: Large ribosomal subunit protein uL15 (159 aa).

The tract at residues 14–44 (ASRKRVGRGRATGWGCTSGRGNKGQNSRAGA) is disordered. A compositionally biased stretch (gly residues) spans 23–35 (RATGWGCTSGRGN).

It belongs to the universal ribosomal protein uL15 family. As to quaternary structure, part of the 50S ribosomal subunit.

Binds to the 23S rRNA. The chain is Large ribosomal subunit protein uL15 from Solidesulfovibrio magneticus (strain ATCC 700980 / DSM 13731 / RS-1) (Desulfovibrio magneticus).